The primary structure comprises 180 residues: Protein SPMIP9 (180 aa).

Microtubule inner protein component of sperm flagellar doublet microtubules. Only detected after the mouse is 35 days old. Expression increases gradually from day 35 to 6 months, and remains stable after 54 days. Exclusively expressed in the epididymis and testis.

The protein resides in the nucleus. Its subcellular location is the cytoplasm. It localises to the cytoskeleton. The protein localises to the flagellum axoneme. Its function is as follows. Microtubule inner protein (MIP) part of the dynein-decorated doublet microtubules (DMTs) in flagella axoneme. The chain is Protein SPMIP9 (Spmip9) from Mus musculus (Mouse).